We begin with the raw amino-acid sequence, 102 residues long: Integration host factor subunit beta (102 aa).

The protein belongs to the bacterial histone-like protein family. As to quaternary structure, heterodimer of an alpha and a beta chain.

In terms of biological role, this protein is one of the two subunits of integration host factor, a specific DNA-binding protein that functions in genetic recombination as well as in transcriptional and translational control. This Marinomonas sp. (strain MWYL1) protein is Integration host factor subunit beta.